A 444-amino-acid polypeptide reads, in one-letter code: Methylenetetrahydrofolate--tRNA-(uracil-5-)-methyltransferase TrmFO (444 aa).

Residue 9 to 14 (GAGMAG) coordinates FAD.

The protein belongs to the MnmG family. TrmFO subfamily. FAD is required as a cofactor.

The protein resides in the cytoplasm. The enzyme catalyses uridine(54) in tRNA + (6R)-5,10-methylene-5,6,7,8-tetrahydrofolate + NADH + H(+) = 5-methyluridine(54) in tRNA + (6S)-5,6,7,8-tetrahydrofolate + NAD(+). It carries out the reaction uridine(54) in tRNA + (6R)-5,10-methylene-5,6,7,8-tetrahydrofolate + NADPH + H(+) = 5-methyluridine(54) in tRNA + (6S)-5,6,7,8-tetrahydrofolate + NADP(+). Catalyzes the folate-dependent formation of 5-methyl-uridine at position 54 (M-5-U54) in all tRNAs. The chain is Methylenetetrahydrofolate--tRNA-(uracil-5-)-methyltransferase TrmFO from Cereibacter sphaeroides (strain ATCC 17029 / ATH 2.4.9) (Rhodobacter sphaeroides).